The chain runs to 268 residues: Ribosomal RNA small subunit methyltransferase A (268 aa).

The S-adenosyl-L-methionine site is built by asparagine 18, leucine 20, glycine 45, glutamate 66, aspartate 91, and asparagine 112.

It belongs to the class I-like SAM-binding methyltransferase superfamily. rRNA adenine N(6)-methyltransferase family. RsmA subfamily.

It is found in the cytoplasm. The catalysed reaction is adenosine(1518)/adenosine(1519) in 16S rRNA + 4 S-adenosyl-L-methionine = N(6)-dimethyladenosine(1518)/N(6)-dimethyladenosine(1519) in 16S rRNA + 4 S-adenosyl-L-homocysteine + 4 H(+). In terms of biological role, specifically dimethylates two adjacent adenosines (A1518 and A1519) in the loop of a conserved hairpin near the 3'-end of 16S rRNA in the 30S particle. May play a critical role in biogenesis of 30S subunits. The sequence is that of Ribosomal RNA small subunit methyltransferase A from Shewanella oneidensis (strain ATCC 700550 / JCM 31522 / CIP 106686 / LMG 19005 / NCIMB 14063 / MR-1).